Reading from the N-terminus, the 617-residue chain is Glutamyl-tRNA(Gln) amidotransferase subunit E (617 aa).

This sequence belongs to the GatB/GatE family. GatE subfamily. In terms of assembly, heterodimer of GatD and GatE.

The enzyme catalyses L-glutamyl-tRNA(Gln) + L-glutamine + ATP + H2O = L-glutaminyl-tRNA(Gln) + L-glutamate + ADP + phosphate + H(+). Functionally, allows the formation of correctly charged Gln-tRNA(Gln) through the transamidation of misacylated Glu-tRNA(Gln) in organisms which lack glutaminyl-tRNA synthetase. The reaction takes place in the presence of glutamine and ATP through an activated gamma-phospho-Glu-tRNA(Gln). The GatDE system is specific for glutamate and does not act on aspartate. In Natronomonas pharaonis (strain ATCC 35678 / DSM 2160 / CIP 103997 / JCM 8858 / NBRC 14720 / NCIMB 2260 / Gabara) (Halobacterium pharaonis), this protein is Glutamyl-tRNA(Gln) amidotransferase subunit E.